A 456-amino-acid polypeptide reads, in one-letter code: Bifunctional protein GlmU (456 aa).

A pyrophosphorylase region spans residues 1–229 (MSNSAMSVVI…LSEVEGVNNR (229 aa)). UDP-N-acetyl-alpha-D-glucosamine-binding positions include 11-14 (LAAG), Lys25, Gln76, 81-82 (GT), 103-105 (YGD), Gly140, Glu154, Asn169, and Asn227. Asp105 is a Mg(2+) binding site. Asn227 serves as a coordination point for Mg(2+). The tract at residues 230 to 250 (LQLARLERVYQAEQAEKLLLA) is linker. Residues 251-456 (GVMLRDPARF…QGWQRPVKKK (206 aa)) form an N-acetyltransferase region. Residues Arg333 and Lys351 each coordinate UDP-N-acetyl-alpha-D-glucosamine. Catalysis depends on His363, which acts as the Proton acceptor. UDP-N-acetyl-alpha-D-glucosamine contacts are provided by Tyr366 and Asn377. Residues Ala380, 386-387 (NY), Ser405, Ala423, and Arg440 each bind acetyl-CoA.

In the N-terminal section; belongs to the N-acetylglucosamine-1-phosphate uridyltransferase family. This sequence in the C-terminal section; belongs to the transferase hexapeptide repeat family. Homotrimer. Mg(2+) serves as cofactor.

The protein localises to the cytoplasm. The catalysed reaction is alpha-D-glucosamine 1-phosphate + acetyl-CoA = N-acetyl-alpha-D-glucosamine 1-phosphate + CoA + H(+). The enzyme catalyses N-acetyl-alpha-D-glucosamine 1-phosphate + UTP + H(+) = UDP-N-acetyl-alpha-D-glucosamine + diphosphate. Its pathway is nucleotide-sugar biosynthesis; UDP-N-acetyl-alpha-D-glucosamine biosynthesis; N-acetyl-alpha-D-glucosamine 1-phosphate from alpha-D-glucosamine 6-phosphate (route II): step 2/2. It functions in the pathway nucleotide-sugar biosynthesis; UDP-N-acetyl-alpha-D-glucosamine biosynthesis; UDP-N-acetyl-alpha-D-glucosamine from N-acetyl-alpha-D-glucosamine 1-phosphate: step 1/1. The protein operates within bacterial outer membrane biogenesis; LPS lipid A biosynthesis. Its function is as follows. Catalyzes the last two sequential reactions in the de novo biosynthetic pathway for UDP-N-acetylglucosamine (UDP-GlcNAc). The C-terminal domain catalyzes the transfer of acetyl group from acetyl coenzyme A to glucosamine-1-phosphate (GlcN-1-P) to produce N-acetylglucosamine-1-phosphate (GlcNAc-1-P), which is converted into UDP-GlcNAc by the transfer of uridine 5-monophosphate (from uridine 5-triphosphate), a reaction catalyzed by the N-terminal domain. The polypeptide is Bifunctional protein GlmU (Klebsiella pneumoniae subsp. pneumoniae (strain ATCC 700721 / MGH 78578)).